A 164-amino-acid polypeptide reads, in one-letter code: Lipoprotein signal peptidase (164 aa).

Helical transmembrane passes span 11–31, 41–61, 64–84, and 92–112; these read YWVLALAAIVLDQWSKWAVLS, VIPSFFDLTLVYNPGAAFSFL, QGGWQKYFFLVLAVAVSAYLV, and FATLGKTGAAMIIGGALGNVI. Catalysis depends on residues D122 and D140. A helical transmembrane segment spans residues 132-152; it reads FYPAFNIADSFICVGAVLAVL.

Belongs to the peptidase A8 family.

Its subcellular location is the cell inner membrane. The catalysed reaction is Release of signal peptides from bacterial membrane prolipoproteins. Hydrolyzes -Xaa-Yaa-Zaa-|-(S,diacylglyceryl)Cys-, in which Xaa is hydrophobic (preferably Leu), and Yaa (Ala or Ser) and Zaa (Gly or Ala) have small, neutral side chains.. The protein operates within protein modification; lipoprotein biosynthesis (signal peptide cleavage). Functionally, this protein specifically catalyzes the removal of signal peptides from prolipoproteins. The sequence is that of Lipoprotein signal peptidase from Neisseria meningitidis serogroup C (strain 053442).